Here is an 874-residue protein sequence, read N- to C-terminus: Alanine--tRNA ligase (874 aa).

Positions 564, 568, 665, and 669 each coordinate Zn(2+).

This sequence belongs to the class-II aminoacyl-tRNA synthetase family. The cofactor is Zn(2+).

Its subcellular location is the cytoplasm. The enzyme catalyses tRNA(Ala) + L-alanine + ATP = L-alanyl-tRNA(Ala) + AMP + diphosphate. In terms of biological role, catalyzes the attachment of alanine to tRNA(Ala) in a two-step reaction: alanine is first activated by ATP to form Ala-AMP and then transferred to the acceptor end of tRNA(Ala). Also edits incorrectly charged Ser-tRNA(Ala) and Gly-tRNA(Ala) via its editing domain. The protein is Alanine--tRNA ligase of Paraburkholderia phymatum (strain DSM 17167 / CIP 108236 / LMG 21445 / STM815) (Burkholderia phymatum).